Here is a 67-residue protein sequence, read N- to C-terminus: uncharacterized protein (67 aa).

This is an uncharacterized protein from Vaccinia virus (strain Copenhagen) (VACV).